We begin with the raw amino-acid sequence, 169 residues long: UPF0303 protein BruAb1_1406 (169 aa).

It belongs to the UPF0303 family.

The chain is UPF0303 protein BruAb1_1406 from Brucella abortus biovar 1 (strain 9-941).